We begin with the raw amino-acid sequence, 345 residues long: MEQLQKRKIYDTTASNASTGILNGKSSNVLNWDDVRFSWAYPLYKNMLANFWTPFEINMSHDAKQFPTLTETEQEAFKKIIGLLAFLDSVQTDYSMRAAEYLTDSSLAALMSVLSFQEVVHNQSYSYVLSSLVPKATQDEIFEYWKHDDVLKERNEFIIDGYEKFVDNPTPKTFLESIVYDVILEGLNFYSGFAFFYNLARNQKMVSTSTMINYINRDEQLHVYLFTNIFKELLVEFPELNTEETKTFVKTTLMKAADLEKDWFRYIIGDKIPGINPEDMETYISFIANKRAVQLGMEKPYPEIKHNPMKWIRAYEDVNSGKSDFFEQKSRQYAKVSADNGFDEL.

Residues Asp88, Glu118, and His121 each contribute to the Fe cation site. Residue Tyr125 is part of the active site. Positions 185, 219, and 222 each coordinate Fe cation.

It belongs to the ribonucleoside diphosphate reductase small chain family. Tetramer of two alpha and two beta subunits. Fe cation is required as a cofactor.

The enzyme catalyses a 2'-deoxyribonucleoside 5'-diphosphate + [thioredoxin]-disulfide + H2O = a ribonucleoside 5'-diphosphate + [thioredoxin]-dithiol. Its function is as follows. Provides the precursors necessary for DNA synthesis. Catalyzes the biosynthesis of deoxyribonucleotides from the corresponding ribonucleotides. The protein is Ribonucleoside-diphosphate reductase subunit beta (nrdB) of Halalkalibacterium halodurans (strain ATCC BAA-125 / DSM 18197 / FERM 7344 / JCM 9153 / C-125) (Bacillus halodurans).